We begin with the raw amino-acid sequence, 312 residues long: Protein-methionine-sulfoxide reductase catalytic subunit MsrP (312 aa).

The tat-type signal signal peptide spans 1–42 (MALFRYPRPLPSEITPRDMYLSRRSLIGGAAALGAVSATADA). Mo-molybdopterin contacts are provided by residues N68, 71–72 (YE), C126, S161, N211, R216, and 227–229 (GIK).

It belongs to the MsrP family. As to quaternary structure, heterodimer of a catalytic subunit (MsrP) and a heme-binding subunit (MsrQ). Requires Mo-molybdopterin as cofactor. Post-translationally, predicted to be exported by the Tat system. The position of the signal peptide cleavage has not been experimentally proven.

It localises to the periplasm. The enzyme catalyses L-methionyl-[protein] + a quinone + H2O = L-methionyl-(S)-S-oxide-[protein] + a quinol. It catalyses the reaction L-methionyl-[protein] + a quinone + H2O = L-methionyl-(R)-S-oxide-[protein] + a quinol. In terms of biological role, part of the MsrPQ system that repairs oxidized periplasmic proteins containing methionine sulfoxide residues (Met-O), using respiratory chain electrons. Thus protects these proteins from oxidative-stress damage caused by reactive species of oxygen and chlorine generated by the host defense mechanisms. MsrPQ is essential for the maintenance of envelope integrity under bleach stress, rescuing a wide series of structurally unrelated periplasmic proteins from methionine oxidation. The catalytic subunit MsrP is non-stereospecific, being able to reduce both (R-) and (S-) diastereoisomers of methionine sulfoxide. The sequence is that of Protein-methionine-sulfoxide reductase catalytic subunit MsrP from Gluconobacter oxydans (strain 621H) (Gluconobacter suboxydans).